We begin with the raw amino-acid sequence, 94 residues long: MDARDIIKRPVVTEESTSILDDKKYTFEVDTRATKTQVKYAIEEIFDVKVAKVNVMNYKGKLKRMGRYAGYTNKRRKAIVTVTADSKEIQFFEV.

The protein belongs to the universal ribosomal protein uL23 family. In terms of assembly, part of the 50S ribosomal subunit. Contacts protein L29, and trigger factor when it is bound to the ribosome.

In terms of biological role, one of the early assembly proteins it binds 23S rRNA. One of the proteins that surrounds the polypeptide exit tunnel on the outside of the ribosome. Forms the main docking site for trigger factor binding to the ribosome. This is Large ribosomal subunit protein uL23 from Listeria innocua serovar 6a (strain ATCC BAA-680 / CLIP 11262).